Here is a 328-residue protein sequence, read N- to C-terminus: Flotillin-like protein FloA (328 aa).

2 helical membrane-spanning segments follow: residues 1 to 21 (MFGL…LVLF) and 26 to 46 (VGLW…TLVG).

It belongs to the flotillin-like FloA family. As to quaternary structure, homooligomerizes.

It is found in the cell membrane. Its subcellular location is the membrane raft. In terms of biological role, found in functional membrane microdomains (FMM) that may be equivalent to eukaryotic membrane rafts. FMMs are highly dynamic and increase in number as cells age. Flotillins are thought to be important factors in membrane fluidity. This is Flotillin-like protein FloA from Staphylococcus haemolyticus (strain JCSC1435).